The following is a 274-amino-acid chain: Large ribosomal subunit protein uL2cz (274 aa).

Disordered stretches follow at residues Met1 to Asn25 and Asn224 to Lys274. The span at Lys7–Asn25 shows a compositional bias: polar residues.

The protein belongs to the universal ribosomal protein uL2 family. In terms of assembly, part of the 50S ribosomal subunit.

It is found in the plastid. It localises to the chloroplast. The polypeptide is Large ribosomal subunit protein uL2cz (rpl2-A) (Coffea arabica (Arabian coffee)).